We begin with the raw amino-acid sequence, 291 residues long: MAVGKEILTKIRSVQNTQKITKAMQMVSTSKMRKTQERMRLARPYAEKVRMVMSHLAQTNTDHGIPLLESHREIRRVGFILITSDKGLCGGLNANVLKKFLAQVQEYRNQGIEEEIVCLGSKGLMACQSIGLNVVASAVNLGDTPKMEMLLGPLTELFQRYEKHEIDKIHLVYSGFVNTMRQEPRMEVLLPIGENVIGDSAPKPPFSWEYRYEPTALAVLEYLVRRYLESVVYQALSDNMASEQAARMVAMKAATDNAGNAIKELRLVYNKSRQAAITTELSEIVAGAAAV.

The protein belongs to the ATPase gamma chain family. As to quaternary structure, F-type ATPases have 2 components, CF(1) - the catalytic core - and CF(0) - the membrane proton channel. CF(1) has five subunits: alpha(3), beta(3), gamma(1), delta(1), epsilon(1). CF(0) has three main subunits: a, b and c.

The protein localises to the cell inner membrane. Produces ATP from ADP in the presence of a proton gradient across the membrane. The gamma chain is believed to be important in regulating ATPase activity and the flow of protons through the CF(0) complex. The protein is ATP synthase gamma chain of Neisseria gonorrhoeae (strain NCCP11945).